The sequence spans 207 residues: Inhibitor of hydrogen peroxide resistance (207 aa).

The segment at residues 163 to 182 (MNYIHQRTRVSRSVVAEVLA) is a DNA-binding region (H-T-H motif).

The protein belongs to the IprA family.

In terms of biological role, involved in oxidative stress resistance. The sequence is that of Inhibitor of hydrogen peroxide resistance from Salmonella typhimurium (strain LT2 / SGSC1412 / ATCC 700720).